We begin with the raw amino-acid sequence, 244 residues long: MRNVMIVVEYDGTNYHGWQYQKNAVTVQEVLQKAIKKVTGEEVNLIGASRTDTGVHALYQVANFKTNTKIPAEKLPYALNSVLPDDIVVVQAKDVEDSFHARYSAKRKRYKYIILNRKFQMPTMRNYCWHISYPLNIEEMKKAASYLIGTHDFSAFKASGSSKTSTIRTVYDLTIEKNEDFINIEIEANGFLYNMVRIIVGTLSYVGLGKIKEDEVYDILKSKDRTKAGITAPPQGLYLIKIIY.

Residue Asp-52 is the Nucleophile of the active site. Substrate is bound at residue Tyr-110.

Belongs to the tRNA pseudouridine synthase TruA family. As to quaternary structure, homodimer.

The catalysed reaction is uridine(38/39/40) in tRNA = pseudouridine(38/39/40) in tRNA. Formation of pseudouridine at positions 38, 39 and 40 in the anticodon stem and loop of transfer RNAs. In Thermoanaerobacter pseudethanolicus (strain ATCC 33223 / 39E) (Clostridium thermohydrosulfuricum), this protein is tRNA pseudouridine synthase A.